Reading from the N-terminus, the 353-residue chain is Sesquiterpene synthase Agr8 (353 aa).

Mg(2+) is bound by residues D82, N220, S224, and E228. Positions 82 to 86 match the DDXXD motif motif; it reads DEYTD. R309 and Y310 together coordinate (2E,6E)-farnesyl diphosphate.

This sequence belongs to the terpene synthase family. It depends on Mg(2+) as a cofactor.

It catalyses the reaction (2E,6E)-farnesyl diphosphate = gamma-muurolene + diphosphate. It carries out the reaction (2E,6E)-farnesyl diphosphate = alpha-selinene + diphosphate. The enzyme catalyses (2E,6E)-farnesyl diphosphate = delta-cadinene + diphosphate. Terpene cyclase that catalyzes the cyclization of farnesyl diphosphate (FPP) to various sesquiterpenes, including beta-elemene, gamma-muurolene, alpha-selinene, beta-selinene, beta-cadinene, delta-cadinene and alpha-cadinol. This Cyclocybe aegerita (Black poplar mushroom) protein is Sesquiterpene synthase Agr8.